The chain runs to 130 residues: Small ribosomal subunit protein uS9 (130 aa).

This sequence belongs to the universal ribosomal protein uS9 family.

The polypeptide is Small ribosomal subunit protein uS9 (Streptococcus pyogenes serotype M1).